The following is a 588-amino-acid chain: MDQAINHKIHYISRQQRQEILAIARGEAVADYLIENVVILDLINGGEIAGPIAIKGRYIAGIGSEYNDAPTLQRIDAHGAIAVPGFIDAHLHIESSMMTPVTFETATLPRGLTTVICDPHEIVNVMGEAGFAWFARCAEQARQNQYLQVSSCVPALEGCDVNGASFTLEQMLAWRDHPQVTGLAEMMDYPGVISGQNALLDKLDAFRHLTLDGHCPGLGGKELNAYIAAGIENCHESYLLEEGRRKLQLGMSLMIREGSAARNLNALAPLINEFNSPQCMLCTDDRNPWEIAHEGHIDALIRRLIEQHNVPLHVAYRVASWSTARHFGLNHLGLLAPGKQADIVLLSDARKVTVQQVLVKGEPIDAQTLQAEESARLAQSAPPYGNTIARQPVSASDFALQFTPGKRYRVIDVIHNELITHSRSSVYSENGFDRDDVCFIAVLERYGQRLDPACGLLGGFGLNEGALAATVSHDSHNIVVIGRSAEEMALAVNQVIQDGGGLCVVRNGQVQSHLPLPIAGLMSTDTAQSLAEQIDALKAAARECGPLPDEPFIQMAFLSLPVIPALKLTSQGLFDGEKFAFTTLEVTE.

Belongs to the metallo-dependent hydrolases superfamily. Adenine deaminase family. Homodimer. It depends on Mn(2+) as a cofactor.

It catalyses the reaction adenine + H2O + H(+) = hypoxanthine + NH4(+). The chain is Adenine deaminase from Escherichia fergusonii (strain ATCC 35469 / DSM 13698 / CCUG 18766 / IAM 14443 / JCM 21226 / LMG 7866 / NBRC 102419 / NCTC 12128 / CDC 0568-73).